A 966-amino-acid chain; its full sequence is Alpha-1,4 glucan phosphorylase L-1 isozyme, chloroplastic/amyloplastic (966 aa).

The transit peptide at 1–50 (MATANGAHLFNHYSSNSRFIHFTSRNTSSKLFLTKTSHFRRPKRCFHVNN) directs the protein to the chloroplast. Residue Lys-812 is modified to N6-(pyridoxal phosphate)lysine.

It belongs to the glycogen phosphorylase family. Pyridoxal 5'-phosphate is required as a cofactor. As to expression, tuber.

It localises to the plastid. Its subcellular location is the chloroplast. The protein resides in the amyloplast. It catalyses the reaction [(1-&gt;4)-alpha-D-glucosyl](n) + phosphate = [(1-&gt;4)-alpha-D-glucosyl](n-1) + alpha-D-glucose 1-phosphate. In terms of biological role, phosphorylase is an important allosteric enzyme in carbohydrate metabolism. Enzymes from different sources differ in their regulatory mechanisms and in their natural substrates. However, all known phosphorylases share catalytic and structural properties. This Solanum tuberosum (Potato) protein is Alpha-1,4 glucan phosphorylase L-1 isozyme, chloroplastic/amyloplastic.